We begin with the raw amino-acid sequence, 35 residues long: Cupiennin-1d (35 aa).

E35 is subject to Glutamic acid 1-amide.

It belongs to the cationic peptide 04 (cupiennin) family. 01 subfamily. As to expression, expressed by the venom gland.

It localises to the secreted. In terms of biological role, has antimicrobial activity against B.subtilis, E.coli, E.faecalis, P.aeruginosa, and S.aureus. Has insecticidal and hemolytic activities. Probably acts by disturbing membrane function with its amphipathic structure. The polypeptide is Cupiennin-1d (Cupiennius salei (American wandering spider)).